Consider the following 207-residue polypeptide: LPS-assembly lipoprotein LptE (207 aa).

Positions 1–19 (MRHRILTLLLGLAVLVTAG) are cleaved as a signal peptide. Cys20 is lipidated: N-palmitoyl cysteine. Cys20 is lipidated: S-diacylglycerol cysteine. A disordered region spans residues 168-207 (KNTQKNGDKPVSDANAAQGSTPTAVNETTLGEPAVSTSAK). A compositionally biased stretch (polar residues) spans 182 to 207 (NAAQGSTPTAVNETTLGEPAVSTSAK).

It belongs to the LptE lipoprotein family. In terms of assembly, component of the lipopolysaccharide transport and assembly complex. Interacts with LptD.

It localises to the cell outer membrane. Functionally, together with LptD, is involved in the assembly of lipopolysaccharide (LPS) at the surface of the outer membrane. Required for the proper assembly of LptD. Binds LPS and may serve as the LPS recognition site at the outer membrane. The polypeptide is LPS-assembly lipoprotein LptE (Yersinia pseudotuberculosis serotype O:1b (strain IP 31758)).